The sequence spans 133 residues: Fluoride-specific ion channel FluC (133 aa).

Helical transmembrane passes span 3 to 23, 41 to 61, 76 to 96, and 103 to 123; these read AVVWWQSLLLVMLGGAFGSGL, WGTLAVNLIGSFVAGFLLIWV, IVGLIGGLTTFSSLMVECLVF, and LIVGFYLCITLLFGLLFVFLG. The Na(+) site is built by glycine 81 and threonine 84.

This sequence belongs to the fluoride channel Fluc/FEX (TC 1.A.43) family.

Its subcellular location is the cell inner membrane. The enzyme catalyses fluoride(in) = fluoride(out). With respect to regulation, na(+) is not transported, but it plays an essential structural role and its presence is essential for fluoride channel function. Its function is as follows. Fluoride-specific ion channel. Important for reducing fluoride concentration in the cell, thus reducing its toxicity. This is Fluoride-specific ion channel FluC from Xylella fastidiosa (strain M23).